The following is a 210-amino-acid chain: MKSMMEPQGLGLVPMVVEQSGRGERAYDIYSRLLKERIVFLVGPVTDESANLVVAQMLFLESENPDKDIHFYINSPGGSITAGMSIYDTMNFIKPDVSTLCIGQAASMGAFLLAAGTHGKRFALENSRVMIHQPLLYGGGLSGQVTDIEIHARELVKVKAKMNELLAKHSGQTLERVQSDTERDNFMSAEEARAYGMIDKVLSSRRDVTA.

The active-site Nucleophile is the Ser107. The active site involves His132.

This sequence belongs to the peptidase S14 family. Fourteen ClpP subunits assemble into 2 heptameric rings which stack back to back to give a disk-like structure with a central cavity, resembling the structure of eukaryotic proteasomes.

The protein localises to the cytoplasm. It catalyses the reaction Hydrolysis of proteins to small peptides in the presence of ATP and magnesium. alpha-casein is the usual test substrate. In the absence of ATP, only oligopeptides shorter than five residues are hydrolyzed (such as succinyl-Leu-Tyr-|-NHMec, and Leu-Tyr-Leu-|-Tyr-Trp, in which cleavage of the -Tyr-|-Leu- and -Tyr-|-Trp bonds also occurs).. In terms of biological role, cleaves peptides in various proteins in a process that requires ATP hydrolysis. Has a chymotrypsin-like activity. Plays a major role in the degradation of misfolded proteins. The sequence is that of ATP-dependent Clp protease proteolytic subunit from Chromobacterium violaceum (strain ATCC 12472 / DSM 30191 / JCM 1249 / CCUG 213 / NBRC 12614 / NCIMB 9131 / NCTC 9757 / MK).